The chain runs to 234 residues: Urease accessory protein UreG 1 (234 aa).

The interval 1–29 (MTRTPTGVPMHLGHTHDAPAAVSADATRP) is disordered. 42 to 49 (GPVGSGKT) provides a ligand contact to GTP.

Belongs to the SIMIBI class G3E GTPase family. UreG subfamily. As to quaternary structure, homodimer. UreD, UreF and UreG form a complex that acts as a GTP-hydrolysis-dependent molecular chaperone, activating the urease apoprotein by helping to assemble the nickel containing metallocenter of UreC. The UreE protein probably delivers the nickel.

It is found in the cytoplasm. In terms of biological role, facilitates the functional incorporation of the urease nickel metallocenter. This process requires GTP hydrolysis, probably effectuated by UreG. This is Urease accessory protein UreG 1 from Streptomyces griseus subsp. griseus (strain JCM 4626 / CBS 651.72 / NBRC 13350 / KCC S-0626 / ISP 5235).